Consider the following 360-residue polypeptide: UDP-arabinopyranose mutase 2 (360 aa).

V2 is subject to N-acetylvaline. The short motif at D110–D112 is the DXD motif element. R158 carries N-linked (Glc...) arginine glycosylation.

It belongs to the RGP family. In terms of assembly, heteromers with RGP1, RGP4 and RGP5. The cofactor is Mn(2+). It depends on Mg(2+) as a cofactor. In terms of processing, reversibly glycosylated in vitro by UDP-glucose, UDP-xylose and UDP-galactose, but not UDP-mannose. As to expression, predominantly expressed in shoot and root apical meristems. Expressed in epidermal cells of leaves, inflorescence stems and seed coat. Expressed in pollen.

It localises to the cytoplasm. The protein resides in the cytosol. Its subcellular location is the golgi apparatus. It carries out the reaction UDP-beta-L-arabinofuranose = UDP-beta-L-arabinopyranose. UDP-L-arabinose mutase involved in the biosynthesis of cell wall non-cellulosic polysaccharides. Catalyzes the interconvertion of UDP-L-arabinopyranose (UDP-Arap) and UDP-L-arabinofuranose (UDP-Araf) in vitro. Preferentially catalyzes the formation of UDP-Arap from UDP-Araf. At thermodynamic equilibrium in vitro the ratio of the pyranose form over the furanose form is 95:5. Is not active on other UDP-sugars (UDP-Gal, UDP-Xyl, UDP-Glc, GDP-Man and GDP-Fuc). Functions redundantly with RGP2 and is essential for proper cell walls and pollen development. Probably involved in the formation of the pectocellulosic cell wall layer intine. Is probably active as heteromer in vivo. This Arabidopsis thaliana (Mouse-ear cress) protein is UDP-arabinopyranose mutase 2.